The sequence spans 436 residues: Trigger factor (436 aa).

The region spanning 161–255 is the PPIase FKBP-type domain; it reads DDVAIIDFKT…VKEVREKQLP (95 aa).

Belongs to the FKBP-type PPIase family. Tig subfamily.

The protein resides in the cytoplasm. The enzyme catalyses [protein]-peptidylproline (omega=180) = [protein]-peptidylproline (omega=0). Functionally, involved in protein export. Acts as a chaperone by maintaining the newly synthesized protein in an open conformation. Functions as a peptidyl-prolyl cis-trans isomerase. The polypeptide is Trigger factor (Akkermansia muciniphila (strain ATCC BAA-835 / DSM 22959 / JCM 33894 / BCRC 81048 / CCUG 64013 / CIP 107961 / Muc)).